A 508-amino-acid polypeptide reads, in one-letter code: MGLPWYRVHTVVLNDPGRLLSVHIMHTALVSGWAGSMALYELAVFDPSDPVLDPMWRQGMFVIPFMTRLGITNSWGGWSITGGTITNPGIWSYEGVAGAHIVFSGLCFLAAIWHWVYWDLEIFCDERTGKPSLDLPKIFGIHLFLSGVACFGFGAFHVTGLYGPGIWVSDPYGLTGKVQPVNPAWGVEGFDPFVPGGIASHHIAAGTLGILAGLFHLSVRPPQRLYKGLRMGNIETVLSSSIAAVFFAAFVVAGTMWYGSATTPIELFGPTRYQWDQGYFQQEIYRRVGTGLAENQSLSEAWSKIPEKLAFYDYIGNNPAKGGLFRAGSMDNGDGIAVGWLGHPIFRDKEGRELFVRRMPTFFETFPVVLVDGDGIVRADVPFRRAESKYSVEQVGVTVEFYGGELNGVSYSDPATVKKYARRAQLGEIFELDRATLKSDGVFRSSPRGWFTFGHASFALLFFFGHIWHGARTLFRDVFAGIDPDLDAQVEFGAFQKLGDPTTRRQVV.

The next 6 membrane-spanning stretches (helical) occupy residues 21 to 36, 101 to 115, 140 to 156, 203 to 218, 237 to 252, and 457 to 472; these read SVHI…WAGS, IVFS…IWHW, GIHL…FGAF, IAAG…FHLS, VLSS…AFVV, and SFAL…HGAR.

It belongs to the PsbB/PsbC family. PsbB subfamily. PSII is composed of 1 copy each of membrane proteins PsbA, PsbB, PsbC, PsbD, PsbE, PsbF, PsbH, PsbI, PsbJ, PsbK, PsbL, PsbM, PsbT, PsbX, PsbY, PsbZ, Psb30/Ycf12, at least 3 peripheral proteins of the oxygen-evolving complex and a large number of cofactors. It forms dimeric complexes. Binds multiple chlorophylls. PSII binds additional chlorophylls, carotenoids and specific lipids. serves as cofactor.

Its subcellular location is the plastid. The protein localises to the chloroplast thylakoid membrane. One of the components of the core complex of photosystem II (PSII). It binds chlorophyll and helps catalyze the primary light-induced photochemical processes of PSII. PSII is a light-driven water:plastoquinone oxidoreductase, using light energy to abstract electrons from H(2)O, generating O(2) and a proton gradient subsequently used for ATP formation. This chain is Photosystem II CP47 reaction center protein, found in Platanus occidentalis (Sycamore).